Here is a 545-residue protein sequence, read N- to C-terminus: CTP synthase (545 aa).

Residues 1–266 (MTTNYIFVTG…DDLVCARFGI (266 aa)) are amidoligase domain. Ser-14 contributes to the CTP binding site. Ser-14 serves as a coordination point for UTP. Residues 15–20 (SLGKGI) and Asp-72 each bind ATP. Residues Asp-72 and Glu-140 each contribute to the Mg(2+) site. CTP contacts are provided by residues 147–149 (DIE), 187–192 (KTKPTQ), and Lys-223. Residues 187–192 (KTKPTQ) and Lys-223 each bind UTP. 239–241 (KDV) provides a ligand contact to ATP. Residues 291 to 542 (TIGMVGKYIE…IKAAGENARG (252 aa)) enclose the Glutamine amidotransferase type-1 domain. Position 352 (Gly-352) interacts with L-glutamine. Cys-379 serves as the catalytic Nucleophile; for glutamine hydrolysis. Residues 380-383 (LGMQ), Glu-403, and Arg-470 each bind L-glutamine. Catalysis depends on residues His-515 and Glu-517.

It belongs to the CTP synthase family. In terms of assembly, homotetramer.

The enzyme catalyses UTP + L-glutamine + ATP + H2O = CTP + L-glutamate + ADP + phosphate + 2 H(+). The catalysed reaction is L-glutamine + H2O = L-glutamate + NH4(+). It catalyses the reaction UTP + NH4(+) + ATP = CTP + ADP + phosphate + 2 H(+). The protein operates within pyrimidine metabolism; CTP biosynthesis via de novo pathway; CTP from UDP: step 2/2. Its activity is regulated as follows. Allosterically activated by GTP, when glutamine is the substrate; GTP has no effect on the reaction when ammonia is the substrate. The allosteric effector GTP functions by stabilizing the protein conformation that binds the tetrahedral intermediate(s) formed during glutamine hydrolysis. Inhibited by the product CTP, via allosteric rather than competitive inhibition. Its function is as follows. Catalyzes the ATP-dependent amination of UTP to CTP with either L-glutamine or ammonia as the source of nitrogen. Regulates intracellular CTP levels through interactions with the four ribonucleotide triphosphates. This Vibrio vulnificus (strain CMCP6) protein is CTP synthase.